Consider the following 1342-residue polypeptide: DNA-directed RNA polymerase subunit beta (1342 aa).

K1022 and K1200 each carry N6-acetyllysine.

This sequence belongs to the RNA polymerase beta chain family. As to quaternary structure, the RNAP catalytic core consists of 2 alpha, 1 beta, 1 beta' and 1 omega subunit. When a sigma factor is associated with the core the holoenzyme is formed, which can initiate transcription.

It catalyses the reaction RNA(n) + a ribonucleoside 5'-triphosphate = RNA(n+1) + diphosphate. Functionally, DNA-dependent RNA polymerase catalyzes the transcription of DNA into RNA using the four ribonucleoside triphosphates as substrates. In Escherichia fergusonii (strain ATCC 35469 / DSM 13698 / CCUG 18766 / IAM 14443 / JCM 21226 / LMG 7866 / NBRC 102419 / NCTC 12128 / CDC 0568-73), this protein is DNA-directed RNA polymerase subunit beta.